A 356-amino-acid chain; its full sequence is Tyrosine recombinase XerS (356 aa).

Residues 16-121 (LMPWYVLEYY…ALSSLYKYLT (106 aa)) form the Core-binding (CB) domain. The region spanning 169 to 354 (GFLTYIDQEH…VSDEQKNALD (186 aa)) is the Tyr recombinase domain. Catalysis depends on residues R210, K234, H306, R309, and H332. Catalysis depends on Y341, which acts as the O-(3'-phospho-DNA)-tyrosine intermediate.

Belongs to the 'phage' integrase family. XerS subfamily.

The protein resides in the cytoplasm. FtsK is required for recombination. Functionally, site-specific tyrosine recombinase, which acts by catalyzing the cutting and rejoining of the recombining DNA molecules. Essential to convert dimers of the bacterial chromosome into monomers to permit their segregation at cell division. This chain is Tyrosine recombinase XerS, found in Streptococcus pneumoniae serotype 4 (strain ATCC BAA-334 / TIGR4).